A 480-amino-acid chain; its full sequence is UDP-glucose 6-dehydrogenase 2 (480 aa).

Residues 8 to 13 (GAGYVG), aspartate 33, arginine 38, 86 to 90 (VNTPT), 127 to 128 (ST), and glutamate 161 contribute to the NAD(+) site. Residues 157-161 (EFLAE), 216-223 (KLAANAFL), and 256-269 (RIGP…VGFG) each bind substrate. Cysteine 272 functions as the Nucleophile in the catalytic mechanism. 272–275 (CFQK) contributes to the NAD(+) binding site. 334-335 (FK) is a substrate binding site. Residue arginine 342 coordinates NAD(+). Arginine 447 lines the substrate pocket.

This sequence belongs to the UDP-glucose/GDP-mannose dehydrogenase family. Preferentially expressed in roots.

The catalysed reaction is UDP-alpha-D-glucose + 2 NAD(+) + H2O = UDP-alpha-D-glucuronate + 2 NADH + 3 H(+). It participates in nucleotide-sugar biosynthesis; UDP-alpha-D-glucuronate biosynthesis; UDP-alpha-D-glucuronate from UDP-alpha-D-glucose: step 1/1. Its activity is regulated as follows. Inhibited by UDP-xylose. Its function is as follows. Involved in the biosynthesis of UDP-glucuronic acid (UDP-GlcA), providing nucleotide sugars for cell-wall polymers. Required for the formation of cell wall ingrowths on the outer cell walls of nematode-induced syncytia. In Arabidopsis thaliana (Mouse-ear cress), this protein is UDP-glucose 6-dehydrogenase 2 (UGD2).